Reading from the N-terminus, the 856-residue chain is DNA endonuclease RBBP8 (856 aa).

The tract at residues 25–48 (ELWSKLKECHDKDLQELLMKIGKL) is essential for binding to the MRN complex and for RPA focus formation on DNA damage. 2 coiled-coil regions span residues 38–87 (LQEL…EDRL) and 120–141 (ITEL…SEQL). Disordered regions lie at residues 143–174 (DMQK…DSPL) and 423–456 (DSEQ…DKEN). Residues 156–168 (ENPADTGDGEDGV) show a composition bias toward acidic residues. Positions 493-515 (SSSRTKLTISLVPEKPDTKTILH) are damage-recruitment motif. A disordered region spans residues 695–732 (SPSQSISCKERSDIPSIENKKITSEKEHESKGEPYQKQ). The span at 702–730 (CKERSDIPSIENKKITSEKEHESKGEPYQ) shows a compositional bias: basic and acidic residues. At Thr806 the chain carries Phosphothreonine. Thr818 carries the post-translational modification Phosphothreonine; by ATR.

It belongs to the COM1/SAE2/CtIP family. In terms of assembly, homotetramer; formed by antiparallel association of helical extensions protruding from the N-termini of two parallel coiled-coil dimers. Interacts with the MRN complex; the interaction links DNA sensing to resection. Interacts with samhd1. Post-translationally, phosphorylation at Thr-818 by atr promotes recruitment to double-strand breaks (DSBs).

The protein resides in the nucleus. It is found in the chromosome. Endonuclease that cooperates with the MRE11-RAD50-NBN (MRN) complex in DNA-end resection, the first step of double-strand break (DSB) repair through the homologous recombination (HR) pathway. Functions downstream of the MRN complex and ATM, promotes ATR activation and its recruitment to DSBs in the S/G2 phase facilitating the generation of ssDNA. Specifically promotes the endonuclease activity of the MRN complex to clear DNA ends containing protein adducts: recruited to DSBs by nbn following phosphorylation, and promotes the endonuclease of mre11 to clear protein-DNA adducts and generate clean double-strand break ends. The MRN complex and rbbp8/CtIP are also required for chromosome alignment during metaphase. This Xenopus laevis (African clawed frog) protein is DNA endonuclease RBBP8 (rbbp8).